Here is a 264-residue protein sequence, read N- to C-terminus: 3-methyl-2-oxobutanoate hydroxymethyltransferase (264 aa).

Mg(2+)-binding residues include Asp45 and Asp84. 3-methyl-2-oxobutanoate contacts are provided by residues 45 to 46, Asp84, and Lys112; that span reads DS. Glu114 contributes to the Mg(2+) binding site. The Proton acceptor role is filled by Glu181.

The protein belongs to the PanB family. In terms of assembly, homodecamer; pentamer of dimers. The cofactor is Mg(2+).

It localises to the cytoplasm. The catalysed reaction is 3-methyl-2-oxobutanoate + (6R)-5,10-methylene-5,6,7,8-tetrahydrofolate + H2O = 2-dehydropantoate + (6S)-5,6,7,8-tetrahydrofolate. It participates in cofactor biosynthesis; (R)-pantothenate biosynthesis; (R)-pantoate from 3-methyl-2-oxobutanoate: step 1/2. Its function is as follows. Catalyzes the reversible reaction in which hydroxymethyl group from 5,10-methylenetetrahydrofolate is transferred onto alpha-ketoisovalerate to form ketopantoate. The polypeptide is 3-methyl-2-oxobutanoate hydroxymethyltransferase (Escherichia fergusonii (strain ATCC 35469 / DSM 13698 / CCUG 18766 / IAM 14443 / JCM 21226 / LMG 7866 / NBRC 102419 / NCTC 12128 / CDC 0568-73)).